A 380-amino-acid chain; its full sequence is MTRRTAFFFDELCLWHAAGPHALTLPVGGWVQPPAAAGHAESPETKRRLKSLLDVSGLTARLQLRSAPPASDEDLLRVHPAHYLERFKALSDAGGGSLGQDAPIGPGSYEIARLSAGLAIAALDAVLAGEADNAYSLSRPPGHHCLPDQAMGFCFFANIAVAIEAAKARHGVERVAVLDWDVHHGNGTQAIYYRRDDVLSISLHQDGCFPPGYSGAEDIGEDRGRGFNLNVPLLPGGGHDAYMQAMQRIVLPALERFRPQLIVVASGFDANAVDPLARMQLHSDSFRAMTAMVRDAAERHAGGRLVVVHEGGYSEAYVPFCGLAVIEELSGVRSAVRDPLRDFIELQQPNAAFRDFQRQRLEELAAQFGLCPAQPLQAAR.

Histidine 144 (proton donor/acceptor) is an active-site residue. Residues aspartate 181, histidine 183, and aspartate 269 each contribute to the Zn(2+) site.

Belongs to the histone deacetylase family. As to quaternary structure, homotetramer; dimer of head-to-head dimers. The cofactor is Zn(2+).

Is inhibited by azobenzenes, stilbenes and arylazopyrazoles. Probable protein deacetylase that catalyzes deacetylation of acetylated lysine residues. In vitro, exhibits high activity against artificial HDAC (histone deacetylase) substrates containing acetylated and trifluoroacetylated lysine residues. Is not able to deacetylate acetylated polyamines. The protein is Histone deacetylase-like amidohydrolase of Pseudomonas aeruginosa (strain ATCC 15692 / DSM 22644 / CIP 104116 / JCM 14847 / LMG 12228 / 1C / PRS 101 / PAO1).